Consider the following 153-residue polypeptide: Large ribosomal subunit protein uL15 (153 aa).

The disordered stretch occupies residues 15 to 42; sequence ARRIVGRGSSSGRGTTSGRGTKGQQARA. Gly residues predominate over residues 23-35; that stretch reads SSSGRGTTSGRGT.

Belongs to the universal ribosomal protein uL15 family. Part of the 50S ribosomal subunit.

Functionally, binds to the 23S rRNA. The polypeptide is Large ribosomal subunit protein uL15 (Treponema pallidum (strain Nichols)).